Consider the following 452-residue polypeptide: Translation initiation factor eIF2B subunit gamma (452 aa).

Position 1 is an N-acetylmethionine (methionine 1). The residue at position 261 (serine 261) is a Phosphoserine.

Belongs to the eIF-2B gamma/epsilon subunits family. In terms of assembly, component of the translation initiation factor 2B (eIF2B) complex which is a heterodecamer of two sets of five different subunits: alpha, beta, gamma, delta and epsilon. Subunits alpha, beta and delta comprise a regulatory subcomplex and subunits epsilon and gamma comprise a catalytic subcomplex. Within the complex, the hexameric regulatory complex resides at the center, with the two heterodimeric catalytic subcomplexes bound on opposite sides.

It is found in the cytoplasm. The protein resides in the cytosol. With respect to regulation, activated by the chemical integrated stress response (ISR) inhibitor ISRIB which stimulates guanine nucleotide exchange factor activity for both phosphorylated and unphosphorylated eIF2. Acts as a component of the translation initiation factor 2B (eIF2B) complex, which catalyzes the exchange of GDP for GTP on the eukaryotic initiation factor 2 (eIF2) complex gamma subunit. Its guanine nucleotide exchange factor activity is repressed when bound to eIF2 complex phosphorylated on the alpha subunit, thereby limiting the amount of methionyl-initiator methionine tRNA available to the ribosome and consequently global translation is repressed. The polypeptide is Translation initiation factor eIF2B subunit gamma (EIF2B3) (Bos taurus (Bovine)).